The sequence spans 554 residues: Polyamine aminopropyltransferase 2 (554 aa).

The span at 1–13 (MIEPHAPAPPGSP) shows a compositional bias: pro residues. Residues 1–20 (MIEPHAPAPPGSPPSWGGPC) form a disordered region. A run of 6 helical transmembrane segments spans residues 37 to 57 (FLVLAGVFVCAACGLVYELEL), 69 to 89 (VTQASVVLSVMVFAMGLGSLA), 106 to 126 (AALALVGGSSAMLLYAVFAWT), 139 to 159 (ILLVAFSLAIGVLIGAEVPLL), 184 to 204 (VGALVGGLAFPFVLLPFLGQL), and 206 to 226 (GALLTGTVNAVVGAALVLGLF). The tract at residues 235–516 (RWLLLTANAV…RTAPAPRLDP (282 aa)) is spermidine synthase. Residues 247–492 (ALLATATVLA…SVPGPRRAAA (246 aa)) enclose the PABS domain. Residue Gln-281 participates in S-methyl-5'-thioadenosine binding. Residues His-313 and Asp-335 each contribute to the spermidine site. Residues Glu-355 and 389 to 390 (DA) contribute to the S-methyl-5'-thioadenosine site. Catalysis depends on Asp-408, which acts as the Proton acceptor. The interval 476–495 (DTGPGPGSVPGPRRAAAGPP) is disordered. Residues 485–495 (PGPRRAAAGPP) show a composition bias toward low complexity.

It belongs to the spermidine/spermine synthase family. In terms of assembly, homodimer or homotetramer.

The protein resides in the cell membrane. It carries out the reaction S-adenosyl 3-(methylsulfanyl)propylamine + putrescine = S-methyl-5'-thioadenosine + spermidine + H(+). Its pathway is amine and polyamine biosynthesis; spermidine biosynthesis; spermidine from putrescine: step 1/1. In terms of biological role, catalyzes the irreversible transfer of a propylamine group from the amino donor S-adenosylmethioninamine (decarboxy-AdoMet) to putrescine (1,4-diaminobutane) to yield spermidine. This Streptomyces coelicolor (strain ATCC BAA-471 / A3(2) / M145) protein is Polyamine aminopropyltransferase 2.